Reading from the N-terminus, the 1593-residue chain is Autotransporter CRAC (1593 aa).

The first 54 residues, Met-1–Ala-54, serve as a signal peptide directing secretion. The span at Gly-65–Asn-85 shows a compositional bias: polar residues. Disordered regions lie at residues Gly-65–Ser-100 and Lys-1267–Pro-1286. Over residues Ser-86–Ser-97 the composition is skewed to low complexity. The segment covering Asp-1269 to Thr-1280 has biased composition (polar residues). Positions Asn-1325 to Phe-1593 constitute an Autotransporter domain.

Glycosylated by heptosyltransferas BAHTCr. Glycosylation is required for adhesion to mammalian cells and colonization of the mouse host gastrointestinal tract.

The protein resides in the cell outer membrane. Its function is as follows. Autotransporter required for the colonization of the mouse host gastrointestinal tract, possibly by mediating bacteria adhesion to host cells. The polypeptide is Autotransporter CRAC (Citrobacter rodentium (strain ICC168) (Citrobacter freundii biotype 4280)).